Here is a 477-residue protein sequence, read N- to C-terminus: PTS system MurNAc-GlcNAc-specific EIIBC component (477 aa).

In terms of domain architecture, PTS EIIB type-1 spans 5 to 87 (QQLAHHILDA…VKLSGVQLGE (83 aa)). Catalysis depends on Cys27, which acts as the Phosphocysteine intermediate; for EIIB activity. The segment at 91–113 (HRSNTSNIKNQAQQNKREFQQKR) is disordered. A compositionally biased stretch (polar residues) spans 92 to 104 (RSNTSNIKNQAQQ). In terms of domain architecture, PTS EIIC type-1 spans 123–477 (KSIANIFIPL…EMRNLNKLGD (355 aa)). 10 consecutive transmembrane segments (helical) span residues 128-148 (IFIP…IAAV), 167-187 (VAVL…FTGF), 192-212 (VFGA…LTGI), 227-247 (LIAG…LSII), 267-287 (ISLL…AGFI), 298-318 (VIGV…LPLV), 342-362 (LLPI…ALWV), 377-397 (ALPV…TLPL), 401-421 (FITA…IGHI), and 443-463 (LGYI…TYFF).

The protein resides in the cell membrane. The enzyme catalyses N-acetyl-beta-D-muramate-(1-&gt;4)-N-acetyl-D-glucosamine(out) + N(pros)-phospho-L-histidyl-[protein] = 6-phospho-N-acetyl-beta-D-muramate-(1-&gt;4)-N-acetyl-D-glucosamine(in) + L-histidyl-[protein]. The protein operates within cell wall biogenesis; peptidoglycan recycling. In terms of biological role, the phosphoenolpyruvate-dependent sugar phosphotransferase system (sugar PTS), a major carbohydrate active transport system, catalyzes the phosphorylation of incoming sugar substrates concomitantly with their translocation across the cell membrane. This system is involved in the uptake and phosphorylation of MurNAc-GlcNAc, the principle peptidoglycan turnover product of S.aureus, yielding cytoplasmic MurNAc 6P-GlcNAc. The sequence is that of PTS system MurNAc-GlcNAc-specific EIIBC component from Staphylococcus haemolyticus (strain JCSC1435).